Here is a 372-residue protein sequence, read N- to C-terminus: 3 beta-hydroxysteroid dehydrogenase/Delta 5--&gt;4-isomerase type 2 (372 aa).

Residue Tyr-154 is the Proton acceptor of the active site. Residue Lys-158 participates in NAD(+) binding. Residues 287–307 form a helical membrane-spanning segment; sequence LTLMYWIGFLLEVVSFLLSPI.

It belongs to the 3-beta-HSD family. As to expression, expressed in adrenal gland, testis and ovary.

The protein localises to the endoplasmic reticulum membrane. It localises to the mitochondrion membrane. The enzyme catalyses a 3beta-hydroxy-Delta(5)-steroid + NAD(+) = a 3-oxo-Delta(5)-steroid + NADH + H(+). It carries out the reaction a 3-oxo-Delta(5)-steroid = a 3-oxo-Delta(4)-steroid. The catalysed reaction is pregnenolone + NAD(+) = pregn-5-ene-3,20-dione + NADH + H(+). It catalyses the reaction pregn-5-ene-3,20-dione = progesterone. The enzyme catalyses 3beta-hydroxyandrost-5-en-17-one + NAD(+) = androst-5-ene-3,17-dione + NADH + H(+). It carries out the reaction androst-5-ene-3,17-dione = androst-4-ene-3,17-dione. The protein operates within lipid metabolism; steroid biosynthesis. Its function is as follows. 3-beta-HSD is a bifunctional enzyme, that catalyzes the oxidative conversion of Delta(5)-ene-3-beta-hydroxy steroid, and the oxidative conversion of ketosteroids. The 3-beta-HSD enzymatic system plays a crucial role in the biosynthesis of all classes of hormonal steroids. The protein is 3 beta-hydroxysteroid dehydrogenase/Delta 5--&gt;4-isomerase type 2 of Homo sapiens (Human).